A 468-amino-acid chain; its full sequence is Fibrinogen beta chain (468 aa).

Q1 carries the post-translational modification Pyrrolidone carboxylic acid. Acidic residues predominate over residues 1-10; that stretch reads QFPTDYDEGQ. Residues 1-54 form a disordered region; sequence QFPTDYDEGQDDRPKVGLGARGHRPYDKKKEEAPSLRPVPPPISGGGYRARPAT. T4 is a glycosylation site (O-linked (GalNAc...) threonine). Sulfotyrosine is present on Y6. The segment covering 24-34 has biased composition (basic and acidic residues); it reads RPYDKKKEEAP. A coiled-coil region spans residues 88 to 204; it reads KLQDTLVRQE…TQMEYCRTPC (117 aa). 2 disulfides stabilise this stretch: C208–C293 and C218–C247. Residues 209–465 enclose the Fibrinogen C-terminal domain; that stretch reads NIPVVSGKEC…KMSMKIRPYF (257 aa). A glycan (N-linked (GlcNAc...) asparagine) is linked at N371. A disulfide bridge connects residues C401 and C414.

As to quaternary structure, heterohexamer; disulfide linked. Contains 2 sets of 3 non-identical chains (alpha, beta and gamma). The 2 heterotrimers are in head to head conformation with the N-termini in a small central domain. Post-translationally, conversion of fibrinogen to fibrin is triggered by thrombin, which cleaves fibrinopeptides A and B from alpha and beta chains, and thus exposes the N-terminal polymerization sites responsible for the formation of the soft clot. The soft clot is converted into the hard clot by factor XIIIA which catalyzes the epsilon-(gamma-glutamyl)lysine cross-linking between gamma chains (stronger) and between alpha chains (weaker) of different monomers. As to expression, detected in blood plasma (at protein level).

It is found in the secreted. In terms of biological role, cleaved by the protease thrombin to yield monomers which, together with fibrinogen alpha (FGA) and fibrinogen gamma (FGG), polymerize to form an insoluble fibrin matrix. Fibrin has a major function in hemostasis as one of the primary components of blood clots. In addition, functions during the early stages of wound repair to stabilize the lesion and guide cell migration during re-epithelialization. Was originally thought to be essential for platelet aggregation, based on in vitro studies using anticoagulated blood. However subsequent studies have shown that it is not absolutely required for thrombus formation in vivo. Enhances expression of SELP in activated platelets. Maternal fibrinogen is essential for successful pregnancy. Fibrin deposition is also associated with infection, where it protects against IFNG-mediated hemorrhage. May also facilitate the antibacterial immune response via both innate and T-cell mediated pathways. The sequence is that of Fibrinogen beta chain (FGB) from Bos taurus (Bovine).